The following is a 414-amino-acid chain: Gamma-glutamyl phosphate reductase (414 aa).

It belongs to the gamma-glutamyl phosphate reductase family.

Its subcellular location is the cytoplasm. It catalyses the reaction L-glutamate 5-semialdehyde + phosphate + NADP(+) = L-glutamyl 5-phosphate + NADPH + H(+). The protein operates within amino-acid biosynthesis; L-proline biosynthesis; L-glutamate 5-semialdehyde from L-glutamate: step 2/2. Its function is as follows. Catalyzes the NADPH-dependent reduction of L-glutamate 5-phosphate into L-glutamate 5-semialdehyde and phosphate. The product spontaneously undergoes cyclization to form 1-pyrroline-5-carboxylate. The protein is Gamma-glutamyl phosphate reductase of Bacillus anthracis (strain A0248).